A 705-amino-acid chain; its full sequence is Tryptophan synthase (705 aa).

The tryptophan synthase alpha chain stretch occupies residues 1–293 (MEAIKKVFEQ…QLTPNAETAK (293 aa)). Catalysis depends on proton acceptor residues Glu49 and Asp60. The segment at 266–287 (KGEPSRVRSPGAAQRTPSQLTP) is disordered. The tract at residues 294 to 705 (GVENILPARF…HVSSNAIPSK (412 aa)) is tryptophan synthase beta chain. Lys381 carries the post-translational modification N6-(pyridoxal phosphate)lysine.

This sequence in the N-terminal section; belongs to the TrpA family. In the C-terminal section; belongs to the TrpB family. Pyridoxal 5'-phosphate serves as cofactor.

It catalyses the reaction (1S,2R)-1-C-(indol-3-yl)glycerol 3-phosphate + L-serine = D-glyceraldehyde 3-phosphate + L-tryptophan + H2O. It functions in the pathway amino-acid biosynthesis; L-tryptophan biosynthesis; L-tryptophan from chorismate: step 5/5. The protein is Tryptophan synthase (TRP-1) of Coprinopsis cinerea (Inky cap fungus).